The chain runs to 350 residues: DNA-directed RNA polymerase subunit alpha (350 aa).

The interval 1–226 (MLISQRPTLS…ELFGLARELN (226 aa)) is alpha N-terminal domain (alpha-NTD). Residues 241–350 (ADQAAHFALP…NQDYAETEQL (110 aa)) form an alpha C-terminal domain (alpha-CTD) region. A disordered region spans residues 328-350 (GTWNSDAGYDLEDNQDYAETEQL). A compositionally biased stretch (acidic residues) spans 336–350 (YDLEDNQDYAETEQL).

This sequence belongs to the RNA polymerase alpha chain family. In terms of assembly, homodimer. The RNAP catalytic core consists of 2 alpha, 1 beta, 1 beta' and 1 omega subunit. When a sigma factor is associated with the core the holoenzyme is formed, which can initiate transcription.

The enzyme catalyses RNA(n) + a ribonucleoside 5'-triphosphate = RNA(n+1) + diphosphate. Functionally, DNA-dependent RNA polymerase catalyzes the transcription of DNA into RNA using the four ribonucleoside triphosphates as substrates. The protein is DNA-directed RNA polymerase subunit alpha of Mycolicibacterium vanbaalenii (strain DSM 7251 / JCM 13017 / BCRC 16820 / KCTC 9966 / NRRL B-24157 / PYR-1) (Mycobacterium vanbaalenii).